The primary structure comprises 599 residues: uncharacterized protein (599 aa).

Positions 1-10 (MEQQSENVYF) are enriched in polar residues. The disordered stretch occupies residues 1–146 (MEQQSENVYF…EPSFTLTELP (146 aa)). Residues 11 to 20 (SGSESESLSD) show a composition bias toward low complexity. Residues 24–44 (RAQPQNQNSDNSRSASLTPPD) show a composition bias toward polar residues. 2 stretches are compositionally biased toward acidic residues: residues 46–56 (SDLEDYVDSDS) and 89–114 (NGSD…EEED). The span at 118–127 (RSSSRSAMDI) shows a compositional bias: low complexity. The segment covering 128-138 (SSEEDSGDDEP) has biased composition (acidic residues).

Belongs to the IIV-6 229L family.

This is an uncharacterized protein from Aedes vexans (Inland floodwater mosquito).